A 388-amino-acid polypeptide reads, in one-letter code: Splicing factor 3B subunit 4 (388 aa).

RRM domains lie at 13–91 and 100–179; these read ATIY…KASA and ANIF…YAFK. The interval 244–388 is disordered; the sequence is QPPPLMGMAQ…GMIPPPPPPS (145 aa). Pro residues-rich tracts occupy residues 261–325, 333–355, and 362–388; these read PPVP…PSRF, MPPP…PPRY, and MYPP…PPPS.

It belongs to the SF3B4 family.

Its subcellular location is the nucleus. Functionally, subunit of the splicing factor SF3B required for 'A' complex assembly formed by the stable binding of U2 snRNP to the branchpoint sequence (BPS) in pre-mRNA. Sequence independent binding of SF3A/SF3B complex upstream of the branch site is essential, it may anchor U2 snRNP to the pre-mRNA. May also be involved in the assembly of the 'E' complex. SF3B4 has been found in complex 'B' and 'C' as well. Belongs also to the minor U12-dependent spliceosome, which is involved in the splicing of rare class of nuclear pre-mRNA intron. The protein is Splicing factor 3B subunit 4 (sap-49) of Caenorhabditis elegans.